We begin with the raw amino-acid sequence, 122 residues long: Large ribosomal subunit protein uL14 (122 aa).

Belongs to the universal ribosomal protein uL14 family. In terms of assembly, part of the 50S ribosomal subunit. Forms a cluster with proteins L3 and L19. In the 70S ribosome, L14 and L19 interact and together make contacts with the 16S rRNA in bridges B5 and B8.

Its function is as follows. Binds to 23S rRNA. Forms part of two intersubunit bridges in the 70S ribosome. The chain is Large ribosomal subunit protein uL14 from Gluconacetobacter diazotrophicus (strain ATCC 49037 / DSM 5601 / CCUG 37298 / CIP 103539 / LMG 7603 / PAl5).